The sequence spans 81 residues: Small ribosomal subunit protein bS18 (81 aa).

This sequence belongs to the bacterial ribosomal protein bS18 family. In terms of assembly, part of the 30S ribosomal subunit. Forms a tight heterodimer with protein bS6.

Its function is as follows. Binds as a heterodimer with protein bS6 to the central domain of the 16S rRNA, where it helps stabilize the platform of the 30S subunit. This is Small ribosomal subunit protein bS18 from Chloroflexus aurantiacus (strain ATCC 29366 / DSM 635 / J-10-fl).